The primary structure comprises 389 residues: Protein IQ-domain 26 (389 aa).

IQ domains follow at residues 106–134 (ERWA…GLVK) and 135–157 (LQAL…SMQA). Residues 137 to 151 (ALVRGYLVRKRAAET) form a calmodulin-binding region. The disordered stretch occupies residues 347–374 (SVSGVRMVQPQPQPQTQTQQQKRSPCSY).

This sequence belongs to the IQD family. As to quaternary structure, binds to multiple calmodulin (CaM) in the presence of Ca(2+) and CaM-like proteins.

The protein localises to the cell membrane. Its subcellular location is the cytoplasm. The protein resides in the cytoskeleton. Its function is as follows. May be involved in cooperative interactions with calmodulins or calmodulin-like proteins. Recruits calmodulin proteins to microtubules, thus being a potential scaffold in cellular signaling and trafficking. May associate with nucleic acids and regulate gene expression at the transcriptional or post-transcriptional level. The polypeptide is Protein IQ-domain 26 (Arabidopsis thaliana (Mouse-ear cress)).